We begin with the raw amino-acid sequence, 201 residues long: MAQLYFYYSAMNAGKSTSLLQSSYNYNERGMRTLVFTAEIDTRFENGKVNSRIGLSSDALLFSQQTDIGELIRNENKQAKVHCVLIDECHFLTKAQIEQICKVTDYDDIPVLCYGLRTDFRGELFSGSQYLLAWADKLVELKTICYCGRKANRVLRFDSEGAAIYDGEQVDIGGNEKYVSVCRKHYMEAINEARKNRKDSV.

Residues 9 to 16 (SAMNAGKS) and 87 to 90 (DECH) each bind ATP. Glu88 acts as the Proton acceptor in catalysis. Zn(2+) contacts are provided by Cys145, Cys147, Cys182, and His185.

The protein belongs to the thymidine kinase family. Homotetramer.

The protein localises to the cytoplasm. It carries out the reaction thymidine + ATP = dTMP + ADP + H(+). This is Thymidine kinase from Photorhabdus laumondii subsp. laumondii (strain DSM 15139 / CIP 105565 / TT01) (Photorhabdus luminescens subsp. laumondii).